The primary structure comprises 162 residues: MERILENAMYASRWLLAPIYFGLSLGLLALALKFFQEIIHVLPNVFTLAEADLVLVILSLIDMSLVGGLLVMVMISGYENFVSQLDIDDSKEKLSWLGKMDSSSLKMKVAASIVAISSIHLLRVFMDAQNISTDYLMWYVIIHMTFVVSAFVMGYLDRITKH.

The next 3 membrane-spanning stretches (helical) occupy residues 15 to 35 (LLAPIYFGLSLGLLALALKFF), 53 to 73 (LVLVILSLIDMSLVGGLLVMV), and 136 to 156 (LMWYVIIHMTFVVSAFVMGYL).

The protein belongs to the UPF0114 family.

It is found in the cell membrane. In Pseudomonas entomophila (strain L48), this protein is UPF0114 protein PSEEN0819.